The sequence spans 437 residues: Aspartic proteinase CDR1 (437 aa).

Residues 1 to 25 (MASLFSSVLLSLCLLSSLFLSNANA) form the signal peptide. A propeptide spans 26–73 (KPKLGFTADLIHRDSPKSPFYNPMETSSQRLRNAIHRSVNRVFHFTEK) (activation peptide). The Peptidase A1 domain maps to 90–430 (YLMNVSIGTP…DTVSKTVSFK (341 aa)). The N-linked (GlcNAc...) asparagine glycan is linked to N93. Catalysis depends on residues D108 and D319.

The protein belongs to the peptidase A1 family.

Its subcellular location is the secreted. The protein localises to the extracellular space. It is found in the apoplast. Functionally, involved in salicylic acid-dependent inducible resistance responses. May release an endogenous peptide elicitor required for the activation of inducible resistance mechanisms. Possesses protease activity in vitro. The protein is Aspartic proteinase CDR1 (CDR1) of Arabidopsis thaliana (Mouse-ear cress).